Here is an 887-residue protein sequence, read N- to C-terminus: Inter-alpha-trypsin inhibitor heavy chain H3 (887 aa).

Residues 1–21 (MVTLWWPCLVLALLSGLETSG) form the signal peptide. The propeptide occupies 22–33 (FPRSPLRLLGKR). In terms of domain architecture, VIT spans 29–158 (LLGKRSLPEG…KVIFELTYEE (130 aa)). N91 is a glycosylation site (N-linked (GlcNAc...) asparagine). The VWFA domain occupies 282-442 (PKNIAFVIDV…YNFLESLALE (161 aa)). An N-linked (GlcNAc...) asparagine glycan is attached at N580. An Aspartate 1-(chondroitin 4-sulfate)-ester modification is found at D647. Positions 648-887 (PHFIIQVPGK…HTDYIVPSLF (240 aa)) are excised as a propeptide.

The protein belongs to the ITIH family. I-alpha-I plasma protease inhibitors are assembled from one or two heavy chains (HC) and one light chain, bikunin. Pre-alpha-inhibitor (P-alpha-I) is composed of ITIH3/HC3 and bikunin. In terms of processing, heavy chains are linked to bikunin via chondroitin 4-sulfate esterified to the alpha-carboxyl of the C-terminal aspartate after propeptide cleavage.

It is found in the secreted. Functionally, may act as a carrier of hyaluronan in serum or as a binding protein between hyaluronan and other matrix protein, including those on cell surfaces in tissues to regulate the localization, synthesis and degradation of hyaluronan which are essential to cells undergoing biological processes. The sequence is that of Inter-alpha-trypsin inhibitor heavy chain H3 (Itih3) from Rattus norvegicus (Rat).